The primary structure comprises 74 residues: Translation initiation factor IF-1 (74 aa).

Residues 1–73 form the S1-like domain; that stretch reads MAKKDDIIEF…TKGRITYRGK (73 aa).

It belongs to the IF-1 family. In terms of assembly, component of the 30S ribosomal translation pre-initiation complex which assembles on the 30S ribosome in the order IF-2 and IF-3, IF-1 and N-formylmethionyl-tRNA(fMet); mRNA recruitment can occur at any time during PIC assembly.

It is found in the cytoplasm. Functionally, one of the essential components for the initiation of protein synthesis. Stabilizes the binding of IF-2 and IF-3 on the 30S subunit to which N-formylmethionyl-tRNA(fMet) subsequently binds. Helps modulate mRNA selection, yielding the 30S pre-initiation complex (PIC). Upon addition of the 50S ribosomal subunit IF-1, IF-2 and IF-3 are released leaving the mature 70S translation initiation complex. In Psychrobacter sp. (strain PRwf-1), this protein is Translation initiation factor IF-1.